Reading from the N-terminus, the 342-residue chain is Phenylalanine--tRNA ligase alpha subunit (342 aa).

Glu-255 serves as a coordination point for Mg(2+).

It belongs to the class-II aminoacyl-tRNA synthetase family. Phe-tRNA synthetase alpha subunit type 1 subfamily. As to quaternary structure, tetramer of two alpha and two beta subunits. Mg(2+) is required as a cofactor.

It localises to the cytoplasm. The catalysed reaction is tRNA(Phe) + L-phenylalanine + ATP = L-phenylalanyl-tRNA(Phe) + AMP + diphosphate + H(+). The protein is Phenylalanine--tRNA ligase alpha subunit of Pelodictyon phaeoclathratiforme (strain DSM 5477 / BU-1).